Consider the following 176-residue polypeptide: NAD(P)H-quinone oxidoreductase subunit 6, chloroplastic (176 aa).

Helical transmembrane passes span 10–30 (FLLVFLGLGLILGGLGVVLLP), 32–52 (PIYSAFSLGLVFVCISLFYIL), 61–81 (AQLLIYVGAINVLIIFAVMFI), 92–112 (LWTVGDGITSVVCTSLFVSLI), and 152–172 (FFLPFEFISIILLVALIGAIA).

It belongs to the complex I subunit 6 family. In terms of assembly, NDH is composed of at least 16 different subunits, 5 of which are encoded in the nucleus.

The protein resides in the plastid. It localises to the chloroplast thylakoid membrane. It catalyses the reaction a plastoquinone + NADH + (n+1) H(+)(in) = a plastoquinol + NAD(+) + n H(+)(out). The catalysed reaction is a plastoquinone + NADPH + (n+1) H(+)(in) = a plastoquinol + NADP(+) + n H(+)(out). Functionally, NDH shuttles electrons from NAD(P)H:plastoquinone, via FMN and iron-sulfur (Fe-S) centers, to quinones in the photosynthetic chain and possibly in a chloroplast respiratory chain. The immediate electron acceptor for the enzyme in this species is believed to be plastoquinone. Couples the redox reaction to proton translocation, and thus conserves the redox energy in a proton gradient. The sequence is that of NAD(P)H-quinone oxidoreductase subunit 6, chloroplastic (ndhG) from Lactuca sativa (Garden lettuce).